We begin with the raw amino-acid sequence, 483 residues long: Cobyric acid synthase (483 aa).

In terms of domain architecture, GATase cobBQ-type spans 251-438 (ALIVAVPMLP…LHGVFSADRF (188 aa)). Cys333 functions as the Nucleophile in the catalytic mechanism. His430 is a catalytic residue.

This sequence belongs to the CobB/CobQ family. CobQ subfamily.

Its pathway is cofactor biosynthesis; adenosylcobalamin biosynthesis. Its function is as follows. Catalyzes amidations at positions B, D, E, and G on adenosylcobyrinic A,C-diamide. NH(2) groups are provided by glutamine, and one molecule of ATP is hydrogenolyzed for each amidation. The chain is Cobyric acid synthase from Brucella melitensis biotype 2 (strain ATCC 23457).